A 1003-amino-acid chain; its full sequence is Putative helicase MOV-10 (1003 aa).

K148 carries the post-translational modification N6-acetyllysine. Phosphothreonine is present on residues T160 and T254. S432 bears the Phosphoserine mark. Residue 524–531 (GPPGTGKT) coordinates ATP. The short motif at 645–648 (DEAG) is the DEAG box element. Positions 921-965 (NPLLLGHDPDWKVFLEFCKENGGYTGCPFPAKLDLQQGQNLLQGL) are interaction with AGO2 and APOBEC3G. The segment at 968 to 1003 (LSPSTSGLKSHDYLPQEREGEEGLSLQVEPEWRNEL) is disordered. Residues S969 and S977 each carry the phosphoserine modification. The segment covering 976 to 985 (KSHDYLPQER) has biased composition (basic and acidic residues).

It belongs to the DNA2/NAM7 helicase family. SDE3 subfamily. Interacts with DICER1, AGO2, TARBP2, EIF6 and RPL7A (60S ribosome subunit); they form a large RNA-induced silencing complex (RISC). Interacts with APOBEC3G in an RNA-dependent manner. Interacts with TRIM71 (via NHL repeats) in an RNA-dependent manner. Interacts with both protein products of LIRE1, ORF1p and ORF2p. Interacts with TUT4 and, to a lesser extent, TUT7; the interactions are RNA-dependent. Interacts with AGO2, TNRC6B and UPF1; the interactions are direct and RNA-dependent. Interacts with FMR1; this interaction is direct, occurs in an RNA-dependent manner on polysomes and induces association of MOV10 with RNAs. Interacts with SHFL; the interaction increases in presence of RNA. Interacts with DHX34; the interaction is-RNA independent. Interacts with RBM46. Post-translationally, ubiquitinated by the DCX(DCAF12) complex that specifically recognizes the glutamate-leucine (Glu-Leu) degron at the C-terminus, leading to its degradation.

It localises to the cytoplasm. Its subcellular location is the P-body. The protein localises to the cytoplasmic ribonucleoprotein granule. It is found in the stress granule. The protein resides in the nucleus. The catalysed reaction is ATP + H2O = ADP + phosphate + H(+). Functionally, 5' to 3' RNA helicase that is involved in a number of cellular roles ranging from mRNA metabolism and translation, modulation of viral infectivity, inhibition of retrotransposition, or regulation of synaptic transmission. Plays an important role in innate antiviral immunity by promoting type I interferon production. Mechanistically, specifically uses IKKepsilon/IKBKE as the mediator kinase for IRF3 activation. Contributes to UPF1 mRNA target degradation by translocation along 3' UTRs. Required for microRNA (miRNA)-mediated gene silencing by the RNA-induced silencing complex (RISC). Required for both miRNA-mediated translational repression and miRNA-mediated cleavage of complementary mRNAs by RISC. In cooperation with FMR1, regulates miRNA-mediated translational repression by AGO2. Restricts retrotransposition of long interspersed element-1 (LINE-1) in cooperation with TUT4 and TUT7 counteracting the RNA chaperonne activity of L1RE1. Facilitates LINE-1 uridylation by TUT4 and TUT7. Required for embryonic viability and for normal central nervous system development and function. Plays two critical roles in early brain development: suppresses retroelements in the nucleus by directly inhibiting cDNA synthesis, while regulates cytoskeletal mRNAs to influence neurite outgrowth in the cytosol. May function as a messenger ribonucleoprotein (mRNP) clearance factor. The protein is Putative helicase MOV-10 (MOV10) of Bos taurus (Bovine).